We begin with the raw amino-acid sequence, 303 residues long: Bifunctional protein FolD 2 (303 aa).

Residues 169–171 (GRS), Ser194, and Ile235 contribute to the NADP(+) site.

The protein belongs to the tetrahydrofolate dehydrogenase/cyclohydrolase family. As to quaternary structure, homodimer.

The catalysed reaction is (6R)-5,10-methylene-5,6,7,8-tetrahydrofolate + NADP(+) = (6R)-5,10-methenyltetrahydrofolate + NADPH. It carries out the reaction (6R)-5,10-methenyltetrahydrofolate + H2O = (6R)-10-formyltetrahydrofolate + H(+). It functions in the pathway one-carbon metabolism; tetrahydrofolate interconversion. Functionally, catalyzes the oxidation of 5,10-methylenetetrahydrofolate to 5,10-methenyltetrahydrofolate and then the hydrolysis of 5,10-methenyltetrahydrofolate to 10-formyltetrahydrofolate. This is Bifunctional protein FolD 2 from Ectopseudomonas mendocina (strain ymp) (Pseudomonas mendocina).